The primary structure comprises 136 residues: Ribonuclease VapC1 (136 aa).

Residues I18–F129 form the PINc domain. Positions 21 and 101 each coordinate Mg(2+).

It belongs to the PINc/VapC protein family. Mg(2+) is required as a cofactor.

Toxic component of a type II toxin-antitoxin (TA) system. An RNase. Its cognate antitoxin is VapB1. The polypeptide is Ribonuclease VapC1 (Methanocaldococcus jannaschii (strain ATCC 43067 / DSM 2661 / JAL-1 / JCM 10045 / NBRC 100440) (Methanococcus jannaschii)).